The primary structure comprises 183 residues: ATP synthase subunit delta (183 aa).

Belongs to the ATPase delta chain family. As to quaternary structure, F-type ATPases have 2 components, F(1) - the catalytic core - and F(0) - the membrane proton channel. F(1) has five subunits: alpha(3), beta(3), gamma(1), delta(1), epsilon(1). F(0) has three main subunits: a(1), b(2) and c(10-14). The alpha and beta chains form an alternating ring which encloses part of the gamma chain. F(1) is attached to F(0) by a central stalk formed by the gamma and epsilon chains, while a peripheral stalk is formed by the delta and b chains.

It localises to the cell inner membrane. Functionally, f(1)F(0) ATP synthase produces ATP from ADP in the presence of a proton or sodium gradient. F-type ATPases consist of two structural domains, F(1) containing the extramembraneous catalytic core and F(0) containing the membrane proton channel, linked together by a central stalk and a peripheral stalk. During catalysis, ATP synthesis in the catalytic domain of F(1) is coupled via a rotary mechanism of the central stalk subunits to proton translocation. Its function is as follows. This protein is part of the stalk that links CF(0) to CF(1). It either transmits conformational changes from CF(0) to CF(1) or is implicated in proton conduction. This chain is ATP synthase subunit delta, found in Rickettsia typhi (strain ATCC VR-144 / Wilmington).